The primary structure comprises 248 residues: Protein GrpE (248 aa).

The disordered stretch occupies residues 229-248 (AAPKEDTLPAQENQSSPADS). A compositionally biased stretch (polar residues) spans 238–248 (AQENQSSPADS).

It belongs to the GrpE family. In terms of assembly, homodimer.

It is found in the cytoplasm. Functionally, participates actively in the response to hyperosmotic and heat shock by preventing the aggregation of stress-denatured proteins, in association with DnaK and GrpE. It is the nucleotide exchange factor for DnaK and may function as a thermosensor. Unfolded proteins bind initially to DnaJ; upon interaction with the DnaJ-bound protein, DnaK hydrolyzes its bound ATP, resulting in the formation of a stable complex. GrpE releases ADP from DnaK; ATP binding to DnaK triggers the release of the substrate protein, thus completing the reaction cycle. Several rounds of ATP-dependent interactions between DnaJ, DnaK and GrpE are required for fully efficient folding. This chain is Protein GrpE, found in Trichormus variabilis (strain ATCC 29413 / PCC 7937) (Anabaena variabilis).